The primary structure comprises 250 residues: 5'-nucleotidase SurE (250 aa).

A divalent metal cation contacts are provided by aspartate 8, aspartate 9, serine 40, and asparagine 95.

This sequence belongs to the SurE nucleotidase family. The cofactor is a divalent metal cation.

The protein resides in the cytoplasm. The catalysed reaction is a ribonucleoside 5'-phosphate + H2O = a ribonucleoside + phosphate. Nucleotidase that shows phosphatase activity on nucleoside 5'-monophosphates. This is 5'-nucleotidase SurE from Nitratidesulfovibrio vulgaris (strain DP4) (Desulfovibrio vulgaris).